Reading from the N-terminus, the 307-residue chain is Ribosomal RNA small subunit methyltransferase H (307 aa).

Residues 31–33 (GGH), Asp51, Tyr83, Asp97, and Gln104 each bind S-adenosyl-L-methionine.

This sequence belongs to the methyltransferase superfamily. RsmH family.

The protein resides in the cytoplasm. The enzyme catalyses cytidine(1402) in 16S rRNA + S-adenosyl-L-methionine = N(4)-methylcytidine(1402) in 16S rRNA + S-adenosyl-L-homocysteine + H(+). In terms of biological role, specifically methylates the N4 position of cytidine in position 1402 (C1402) of 16S rRNA. This Buchnera aphidicola subsp. Cinara cedri (strain Cc) protein is Ribosomal RNA small subunit methyltransferase H.